Here is a 521-residue protein sequence, read N- to C-terminus: ATP synthase subunit beta (521 aa).

Low complexity-rich tracts occupy residues Met-1–Ala-21 and Pro-28–Gly-42. Residues Met-1–Gly-42 are disordered. Gly-199–Thr-206 contacts ATP.

Belongs to the ATPase alpha/beta chains family. In terms of assembly, F-type ATPases have 2 components, CF(1) - the catalytic core - and CF(0) - the membrane proton channel. CF(1) has five subunits: alpha(3), beta(3), gamma(1), delta(1), epsilon(1). CF(0) has three main subunits: a(1), b(2) and c(9-12). The alpha and beta chains form an alternating ring which encloses part of the gamma chain. CF(1) is attached to CF(0) by a central stalk formed by the gamma and epsilon chains, while a peripheral stalk is formed by the delta and b chains.

The protein resides in the cell inner membrane. The enzyme catalyses ATP + H2O + 4 H(+)(in) = ADP + phosphate + 5 H(+)(out). Produces ATP from ADP in the presence of a proton gradient across the membrane. The catalytic sites are hosted primarily by the beta subunits. This chain is ATP synthase subunit beta, found in Brucella abortus (strain 2308).